Reading from the N-terminus, the 248-residue chain is Ribonuclease PH (248 aa).

Phosphate is bound by residues Arg-93 and 131 to 133 (GTR).

It belongs to the RNase PH family. In terms of assembly, homohexameric ring arranged as a trimer of dimers.

It carries out the reaction tRNA(n+1) + phosphate = tRNA(n) + a ribonucleoside 5'-diphosphate. Functionally, phosphorolytic 3'-5' exoribonuclease that plays an important role in tRNA 3'-end maturation. Removes nucleotide residues following the 3'-CCA terminus of tRNAs; can also add nucleotides to the ends of RNA molecules by using nucleoside diphosphates as substrates, but this may not be physiologically important. Probably plays a role in initiation of 16S rRNA degradation (leading to ribosome degradation) during starvation. The chain is Ribonuclease PH from Bifidobacterium longum (strain NCC 2705).